Consider the following 149-residue polypeptide: D-aminoacyl-tRNA deacylase (149 aa).

A Gly-cisPro motif, important for rejection of L-amino acids motif is present at residues 137–138 (GP).

This sequence belongs to the DTD family. As to quaternary structure, homodimer.

The protein localises to the cytoplasm. It carries out the reaction glycyl-tRNA(Ala) + H2O = tRNA(Ala) + glycine + H(+). It catalyses the reaction a D-aminoacyl-tRNA + H2O = a tRNA + a D-alpha-amino acid + H(+). Functionally, an aminoacyl-tRNA editing enzyme that deacylates mischarged D-aminoacyl-tRNAs. Also deacylates mischarged glycyl-tRNA(Ala), protecting cells against glycine mischarging by AlaRS. Acts via tRNA-based rather than protein-based catalysis; rejects L-amino acids rather than detecting D-amino acids in the active site. By recycling D-aminoacyl-tRNA to D-amino acids and free tRNA molecules, this enzyme counteracts the toxicity associated with the formation of D-aminoacyl-tRNA entities in vivo and helps enforce protein L-homochirality. This is D-aminoacyl-tRNA deacylase from Thermoanaerobacter pseudethanolicus (strain ATCC 33223 / 39E) (Clostridium thermohydrosulfuricum).